A 295-amino-acid chain; its full sequence is MMRILLFLATNLAVVLIASITLSLFGFNGFMAANGVDLNLSQLLVFCAVFGFAGSLFSLFISKWMAKMSTGTQIITQPRTRHEQWLLQTVEQLSREAGIKMPEVGIFPAYEANAFATGWNKNDALVAVSQGLLERFKEDEVRAVLAHEIGHVANGDMVTLALIQGVVNTFVMFFARIIGNFVDKVIFKNEEGQGMAYYIATIFAELVLGILASAIVMWFSRKREFRADDAGARLAGTGAMINALQRLRAEQGLPVHMPDTLNAFGINGGIKQGFARMFMSHPPLEERIDALRRRG.

2 consecutive transmembrane segments (helical) span residues 4–24 and 41–61; these read ILLFLATNLAVVLIASITLSL and SQLLVFCAVFGFAGSLFSLFI. Residue His-147 participates in Zn(2+) binding. Glu-148 is an active-site residue. A Zn(2+)-binding site is contributed by His-151. The next 2 membrane-spanning stretches (helical) occupy residues 158 to 178 and 199 to 219; these read VTLALIQGVVNTFVMFFARII and IATIFAELVLGILASAIVMWF. Residue Glu-224 coordinates Zn(2+).

The protein belongs to the peptidase M48B family. Zn(2+) is required as a cofactor.

The protein localises to the cell inner membrane. The protein is Protease HtpX of Pseudomonas fluorescens (strain Pf0-1).